Reading from the N-terminus, the 75-residue chain is uncharacterized protein (75 aa).

The helical transmembrane segment at 49-69 (VDIVAVATTLPFIVAVICIVF) threads the bilayer.

The protein resides in the host membrane. This is an uncharacterized protein from Saccharolobus islandicus (Sulfolobus islandicus).